The following is a 430-amino-acid chain: Tyrosine--tRNA ligase (430 aa).

Y32 contributes to the L-tyrosine binding site. Positions 37-46 (PTADSLHIGH) match the 'HIGH' region motif. Residues Y172 and Q176 each coordinate L-tyrosine. Positions 232 to 236 (KFGKT) match the 'KMSKS' region motif. Residue K235 participates in ATP binding. One can recognise an S4 RNA-binding domain in the interval 362-429 (VKAVDLFVDN…GKKNYYLIIA (68 aa)).

The protein belongs to the class-I aminoacyl-tRNA synthetase family. TyrS type 1 subfamily. As to quaternary structure, homodimer.

It is found in the cytoplasm. The enzyme catalyses tRNA(Tyr) + L-tyrosine + ATP = L-tyrosyl-tRNA(Tyr) + AMP + diphosphate + H(+). Functionally, catalyzes the attachment of tyrosine to tRNA(Tyr) in a two-step reaction: tyrosine is first activated by ATP to form Tyr-AMP and then transferred to the acceptor end of tRNA(Tyr). This is Tyrosine--tRNA ligase from Bacteroides fragilis (strain ATCC 25285 / DSM 2151 / CCUG 4856 / JCM 11019 / LMG 10263 / NCTC 9343 / Onslow / VPI 2553 / EN-2).